Consider the following 346-residue polypeptide: Phosphoribosylformylglycinamidine cyclo-ligase (346 aa).

The protein belongs to the AIR synthase family.

It is found in the cytoplasm. It catalyses the reaction 2-formamido-N(1)-(5-O-phospho-beta-D-ribosyl)acetamidine + ATP = 5-amino-1-(5-phospho-beta-D-ribosyl)imidazole + ADP + phosphate + H(+). Its pathway is purine metabolism; IMP biosynthesis via de novo pathway; 5-amino-1-(5-phospho-D-ribosyl)imidazole from N(2)-formyl-N(1)-(5-phospho-D-ribosyl)glycinamide: step 2/2. In Bacillus cereus (strain ZK / E33L), this protein is Phosphoribosylformylglycinamidine cyclo-ligase.